Reading from the N-terminus, the 288-residue chain is 4-diphosphocytidyl-2-C-methyl-D-erythritol kinase (288 aa).

K13 is an active-site residue. Residue 97–107 (PMGGGIGGGSS) coordinates ATP. D139 is a catalytic residue.

Belongs to the GHMP kinase family. IspE subfamily.

It catalyses the reaction 4-CDP-2-C-methyl-D-erythritol + ATP = 4-CDP-2-C-methyl-D-erythritol 2-phosphate + ADP + H(+). Its pathway is isoprenoid biosynthesis; isopentenyl diphosphate biosynthesis via DXP pathway; isopentenyl diphosphate from 1-deoxy-D-xylulose 5-phosphate: step 3/6. Catalyzes the phosphorylation of the position 2 hydroxy group of 4-diphosphocytidyl-2C-methyl-D-erythritol. This is 4-diphosphocytidyl-2-C-methyl-D-erythritol kinase from Saccharophagus degradans (strain 2-40 / ATCC 43961 / DSM 17024).